Reading from the N-terminus, the 483-residue chain is Glutamyl-tRNA(Gln) amidotransferase subunit A (483 aa).

Residues K76 and S151 each act as charge relay system in the active site. The Acyl-ester intermediate role is filled by S175.

It belongs to the amidase family. GatA subfamily. As to quaternary structure, heterotrimer of A, B and C subunits.

It catalyses the reaction L-glutamyl-tRNA(Gln) + L-glutamine + ATP + H2O = L-glutaminyl-tRNA(Gln) + L-glutamate + ADP + phosphate + H(+). Its function is as follows. Allows the formation of correctly charged Gln-tRNA(Gln) through the transamidation of misacylated Glu-tRNA(Gln) in organisms which lack glutaminyl-tRNA synthetase. The reaction takes place in the presence of glutamine and ATP through an activated gamma-phospho-Glu-tRNA(Gln). This is Glutamyl-tRNA(Gln) amidotransferase subunit A from Pseudomonas savastanoi pv. phaseolicola (strain 1448A / Race 6) (Pseudomonas syringae pv. phaseolicola (strain 1448A / Race 6)).